Consider the following 126-residue polypeptide: S-adenosylmethionine decarboxylase proenzyme (126 aa).

Residue Ser63 is the Schiff-base intermediate with substrate; via pyruvic acid of the active site. Ser63 carries the post-translational modification Pyruvic acid (Ser); by autocatalysis. Residue His68 is the Proton acceptor; for processing activity of the active site. Cys83 functions as the Proton donor; for catalytic activity in the catalytic mechanism.

The protein belongs to the prokaryotic AdoMetDC family. Type 1 subfamily. As to quaternary structure, heterotetramer of two alpha and two beta chains arranged as a dimer of alpha/beta heterodimers. The cofactor is pyruvate. Post-translationally, is synthesized initially as an inactive proenzyme. Formation of the active enzyme involves a self-maturation process in which the active site pyruvoyl group is generated from an internal serine residue via an autocatalytic post-translational modification. Two non-identical subunits are generated from the proenzyme in this reaction, and the pyruvate is formed at the N-terminus of the alpha chain, which is derived from the carboxyl end of the proenzyme. The post-translation cleavage follows an unusual pathway, termed non-hydrolytic serinolysis, in which the side chain hydroxyl group of the serine supplies its oxygen atom to form the C-terminus of the beta chain, while the remainder of the serine residue undergoes an oxidative deamination to produce ammonia and the pyruvoyl group blocking the N-terminus of the alpha chain.

It carries out the reaction S-adenosyl-L-methionine + H(+) = S-adenosyl 3-(methylsulfanyl)propylamine + CO2. Its pathway is amine and polyamine biosynthesis; S-adenosylmethioninamine biosynthesis; S-adenosylmethioninamine from S-adenosyl-L-methionine: step 1/1. Functionally, catalyzes the decarboxylation of S-adenosylmethionine to S-adenosylmethioninamine (dcAdoMet), the propylamine donor required for the synthesis of the polyamines spermine and spermidine from the diamine putrescine. The chain is S-adenosylmethionine decarboxylase proenzyme from Clostridium kluyveri (strain NBRC 12016).